Here is a 2183-residue protein sequence, read N- to C-terminus: DNA polymerase epsilon catalytic subunit A (2183 aa).

Zn(2+) is bound by residues Cys2066, Cys2069, Cys2090, and Cys2093. The CysA-type zinc finger occupies 2066 to 2093 (CFKCKNPCDLDLCKDSCCTKSGFRCPLC). [4Fe-4S] cluster contacts are provided by Cys2124, Cys2127, Cys2139, and Cys2141. Residues 2124-2141 (CDKCRRVKEYELTEFCPC) carry the CysB motif motif.

Belongs to the DNA polymerase type-B family. As to quaternary structure, heterotetramer. Consists of 4 subunits: POL2, DPB2, DPB3 and DPB4. It depends on [4Fe-4S] cluster as a cofactor.

The protein localises to the nucleus. It carries out the reaction DNA(n) + a 2'-deoxyribonucleoside 5'-triphosphate = DNA(n+1) + diphosphate. In terms of biological role, DNA polymerase II participates in chromosomal DNA replication. This Yarrowia lipolytica (strain CLIB 122 / E 150) (Yeast) protein is DNA polymerase epsilon catalytic subunit A (POL2).